Consider the following 142-residue polypeptide: Large ribosomal subunit protein uL13 (142 aa).

This sequence belongs to the universal ribosomal protein uL13 family. In terms of assembly, part of the 50S ribosomal subunit.

Functionally, this protein is one of the early assembly proteins of the 50S ribosomal subunit, although it is not seen to bind rRNA by itself. It is important during the early stages of 50S assembly. This chain is Large ribosomal subunit protein uL13, found in Teredinibacter turnerae (strain ATCC 39867 / T7901).